Here is a 404-residue protein sequence, read N- to C-terminus: Dual-specificity RNA methyltransferase RlmN (404 aa).

Residue Glu-119 is the Proton acceptor of the active site. The 233-residue stretch at 126–358 (VGRAGALCVS…NKAGYSSPIR (233 aa)) folds into the Radical SAM core domain. Cys-133 and Cys-369 are joined by a disulfide. [4Fe-4S] cluster-binding residues include Cys-140, Cys-144, and Cys-147. Residues 195–196 (GE), Ser-227, 249–251 (SLH), and Asn-326 each bind S-adenosyl-L-methionine. Cys-369 serves as the catalytic S-methylcysteine intermediate.

This sequence belongs to the radical SAM superfamily. RlmN family. [4Fe-4S] cluster is required as a cofactor.

The protein localises to the cytoplasm. It carries out the reaction adenosine(2503) in 23S rRNA + 2 reduced [2Fe-2S]-[ferredoxin] + 2 S-adenosyl-L-methionine = 2-methyladenosine(2503) in 23S rRNA + 5'-deoxyadenosine + L-methionine + 2 oxidized [2Fe-2S]-[ferredoxin] + S-adenosyl-L-homocysteine. The catalysed reaction is adenosine(37) in tRNA + 2 reduced [2Fe-2S]-[ferredoxin] + 2 S-adenosyl-L-methionine = 2-methyladenosine(37) in tRNA + 5'-deoxyadenosine + L-methionine + 2 oxidized [2Fe-2S]-[ferredoxin] + S-adenosyl-L-homocysteine. Specifically methylates position 2 of adenine 2503 in 23S rRNA and position 2 of adenine 37 in tRNAs. m2A2503 modification seems to play a crucial role in the proofreading step occurring at the peptidyl transferase center and thus would serve to optimize ribosomal fidelity. This Caulobacter sp. (strain K31) protein is Dual-specificity RNA methyltransferase RlmN.